The sequence spans 304 residues: Non-specific ribonucleoside hydrolase RihC (304 aa).

The active site involves histidine 233.

Belongs to the IUNH family. RihC subfamily.

Hydrolyzes both purine and pyrimidine ribonucleosides with a broad-substrate specificity. This chain is Non-specific ribonucleoside hydrolase RihC, found in Escherichia coli O127:H6 (strain E2348/69 / EPEC).